The following is a 182-amino-acid chain: Putative manganese efflux pump MntP (182 aa).

6 helical membrane passes run 6–26 (LIPL…VSLG), 37–57 (ILYI…IGMV), 72–92 (FAGA…SILE), 101–121 (IGIS…SVGL), 131–151 (IITI…GLLL), and 162–182 (YGEI…LFPI).

This sequence belongs to the MntP (TC 9.B.29) family.

Its subcellular location is the cell membrane. Functionally, probably functions as a manganese efflux pump. This chain is Putative manganese efflux pump MntP, found in Bacillus mycoides (strain KBAB4) (Bacillus weihenstephanensis).